Reading from the N-terminus, the 330-residue chain is Glycerol-3-phosphate dehydrogenase [NAD(P)+] (330 aa).

Residues Ser10, Trp11, Arg31, and Lys104 each coordinate NADPH. Lys104, Gly131, and Ser133 together coordinate sn-glycerol 3-phosphate. NADPH is bound at residue Ala135. Sn-glycerol 3-phosphate contacts are provided by Lys186, Asp239, Ser249, Arg250, and Asn251. The active-site Proton acceptor is Lys186. Arg250 provides a ligand contact to NADPH. NADPH-binding residues include Val274 and Glu276.

This sequence belongs to the NAD-dependent glycerol-3-phosphate dehydrogenase family.

Its subcellular location is the cytoplasm. It carries out the reaction sn-glycerol 3-phosphate + NAD(+) = dihydroxyacetone phosphate + NADH + H(+). The enzyme catalyses sn-glycerol 3-phosphate + NADP(+) = dihydroxyacetone phosphate + NADPH + H(+). Its pathway is membrane lipid metabolism; glycerophospholipid metabolism. In terms of biological role, catalyzes the reduction of the glycolytic intermediate dihydroxyacetone phosphate (DHAP) to sn-glycerol 3-phosphate (G3P), the key precursor for phospholipid synthesis. The protein is Glycerol-3-phosphate dehydrogenase [NAD(P)+] of Thermoanaerobacter sp. (strain X514).